Reading from the N-terminus, the 663-residue chain is UvrABC system protein B (663 aa).

The Helicase ATP-binding domain occupies 31 to 271 (DNIEGGEKAQ…EASIAKIQAE (241 aa)). 44–51 (GATGTGKT) lines the ATP pocket. Positions 97 to 120 (YYDYYQPEAYVPSSDTYIEKDSSV) match the Beta-hairpin motif. The 167-residue stretch at 435–601 (QMDDLLGEIN…TIKKEIRDLI (167 aa)) folds into the Helicase C-terminal domain. Positions 627 to 662 (QEAIKKLQKQMHEAAELLDFELAAQIRDMVLELKSM) constitute a UVR domain.

It belongs to the UvrB family. As to quaternary structure, forms a heterotetramer with UvrA during the search for lesions. Interacts with UvrC in an incision complex.

The protein resides in the cytoplasm. The UvrABC repair system catalyzes the recognition and processing of DNA lesions. A damage recognition complex composed of 2 UvrA and 2 UvrB subunits scans DNA for abnormalities. Upon binding of the UvrA(2)B(2) complex to a putative damaged site, the DNA wraps around one UvrB monomer. DNA wrap is dependent on ATP binding by UvrB and probably causes local melting of the DNA helix, facilitating insertion of UvrB beta-hairpin between the DNA strands. Then UvrB probes one DNA strand for the presence of a lesion. If a lesion is found the UvrA subunits dissociate and the UvrB-DNA preincision complex is formed. This complex is subsequently bound by UvrC and the second UvrB is released. If no lesion is found, the DNA wraps around the other UvrB subunit that will check the other stand for damage. This Streptococcus uberis (strain ATCC BAA-854 / 0140J) protein is UvrABC system protein B.